The primary structure comprises 140 residues: Ribonuclease P protein component (140 aa).

It belongs to the RnpA family. In terms of assembly, consists of a catalytic RNA component (M1 or rnpB) and a protein subunit.

The enzyme catalyses Endonucleolytic cleavage of RNA, removing 5'-extranucleotides from tRNA precursor.. In terms of biological role, RNaseP catalyzes the removal of the 5'-leader sequence from pre-tRNA to produce the mature 5'-terminus. It can also cleave other RNA substrates such as 4.5S RNA. The protein component plays an auxiliary but essential role in vivo by binding to the 5'-leader sequence and broadening the substrate specificity of the ribozyme. This is Ribonuclease P protein component from Ralstonia pickettii (strain 12J).